The following is a 67-amino-acid chain: Protein SlyX homolog (67 aa).

The protein belongs to the SlyX family.

The chain is Protein SlyX homolog from Thiobacillus denitrificans (strain ATCC 25259 / T1).